A 303-amino-acid chain; its full sequence is N-acetyl-D-glucosamine kinase (303 aa).

ATP contacts are provided by residues 4-11 and 133-140; these read GFDIGGTK and GVGGGLVL. The Zn(2+) site is built by histidine 157, cysteine 177, cysteine 179, and cysteine 184.

The protein belongs to the ROK (NagC/XylR) family. NagK subfamily.

It carries out the reaction N-acetyl-D-glucosamine + ATP = N-acetyl-D-glucosamine 6-phosphate + ADP + H(+). The protein operates within cell wall biogenesis; peptidoglycan recycling. Catalyzes the phosphorylation of N-acetyl-D-glucosamine (GlcNAc) derived from cell-wall degradation, yielding GlcNAc-6-P. This is N-acetyl-D-glucosamine kinase from Citrobacter koseri (strain ATCC BAA-895 / CDC 4225-83 / SGSC4696).